Reading from the N-terminus, the 901-residue chain is Cyanophycin synthetase (901 aa).

The ATP-grasp domain occupies 224–478 (KRILAASGVP…VAGAVMDMLF (255 aa)). An ATP-binding site is contributed by 493–499 (GTNGKTT).

It in the C-terminal section; belongs to the MurCDEF family. Homodimer.

The catalysed reaction is [L-4-(L-arginin-2-N-yl)aspartate](n) + L-aspartate + ATP = [L-4-(L-arginin-2-N-yl)aspartate](n)-L-aspartate + ADP + phosphate + H(+). It carries out the reaction [L-4-(L-arginin-2-N-yl)aspartate](n)-L-aspartate + L-arginine + ATP = [L-4-(L-arginin-2-N-yl)aspartate](n+1) + ADP + phosphate + H(+). In terms of biological role, catalyzes the ATP-dependent polymerization of arginine and aspartate to multi-L-arginyl-poly-L-aspartic acid (cyanophycin; a water-insoluble reserve polymer). The protein is Cyanophycin synthetase (cphA) of Trichormus variabilis (strain ATCC 29413 / PCC 7937) (Anabaena variabilis).